Reading from the N-terminus, the 94-residue chain is Cell division topological specificity factor (94 aa).

Belongs to the MinE family.

Its function is as follows. Prevents the cell division inhibition by proteins MinC and MinD at internal division sites while permitting inhibition at polar sites. This ensures cell division at the proper site by restricting the formation of a division septum at the midpoint of the long axis of the cell. The protein is Cell division topological specificity factor of Synechococcus sp. (strain CC9311).